The sequence spans 422 residues: Growth arrest-specific protein 7 (422 aa).

A disordered region spans residues 1–117 (MATALQKPGM…SPGRKQSKEN (117 aa)). Residues 22-55 (VILPPGWHSYLSPQGRRYYVNTTTNETTWERPSS) enclose the WW domain. Polar residues predominate over residues 41-52 (VNTTTNETTWER). The segment covering 53–65 (PSSSPGISASPGP) has biased composition (low complexity). Residues Ser62 and Ser108 each carry the phosphoserine modification. Over residues 95–117 (RKSTGDSQNLGSSSPGRKQSKEN) the composition is skewed to polar residues. Residues 141–402 (TEWSYCDYFW…LLRKVDPAKD (262 aa)) enclose the F-BAR domain. The stretch at 254–329 (ENFKKDMKKC…RKSTQAGDDL (76 aa)) forms a coiled coil.

The protein resides in the cytoplasm. In terms of biological role, may play a role in promoting maturation and morphological differentiation of cerebellar neurons. The sequence is that of Growth arrest-specific protein 7 (Gas7) from Rattus norvegicus (Rat).